Consider the following 147-residue polypeptide: Small ribosomal subunit protein uS12 (147 aa).

Residues 1–22 (MPTINQLVRKPRKSKIEKSDSP) form a disordered region. D102 is modified (3-methylthioaspartic acid).

This sequence belongs to the universal ribosomal protein uS12 family. As to quaternary structure, part of the 30S ribosomal subunit. Contacts proteins S8 and S17. May interact with IF1 in the 30S initiation complex.

Functionally, with S4 and S5 plays an important role in translational accuracy. In terms of biological role, interacts with and stabilizes bases of the 16S rRNA that are involved in tRNA selection in the A site and with the mRNA backbone. Located at the interface of the 30S and 50S subunits, it traverses the body of the 30S subunit contacting proteins on the other side and probably holding the rRNA structure together. The combined cluster of proteins S8, S12 and S17 appears to hold together the shoulder and platform of the 30S subunit. This chain is Small ribosomal subunit protein uS12, found in Streptococcus pyogenes serotype M12 (strain MGAS2096).